The primary structure comprises 211 residues: FMN-dependent NADH:quinone oxidoreductase 2 (211 aa).

FMN is bound by residues serine 10 and 17–19; that span reads SRS.

Belongs to the azoreductase type 1 family. In terms of assembly, homodimer. FMN is required as a cofactor.

It catalyses the reaction 2 a quinone + NADH + H(+) = 2 a 1,4-benzosemiquinone + NAD(+). The enzyme catalyses N,N-dimethyl-1,4-phenylenediamine + anthranilate + 2 NAD(+) = 2-(4-dimethylaminophenyl)diazenylbenzoate + 2 NADH + 2 H(+). Its function is as follows. Quinone reductase that provides resistance to thiol-specific stress caused by electrophilic quinones. In terms of biological role, also exhibits azoreductase activity. Catalyzes the reductive cleavage of the azo bond in aromatic azo compounds to the corresponding amines. The protein is FMN-dependent NADH:quinone oxidoreductase 2 of Listeria monocytogenes serotype 4b (strain F2365).